Here is a 1528-residue protein sequence, read N- to C-terminus: 5'-3' exoribonuclease 1 (1528 aa).

3 disordered regions span residues 1246-1331 (SKKA…KSSE), 1431-1455 (PPPA…NVSD), and 1470-1528 (LKKF…DEST). The span at 1274–1304 (QSEEKLRKERAHDLLNFIKKDTNEKNSESVD) shows a compositional bias: basic and acidic residues. Residues 1317-1326 (AKKVLLKRPA) are compositionally biased toward basic residues. The span at 1500-1517 (SSGTNSTECQSPKSQSNA) shows a compositional bias: polar residues. Thr-1506 is modified (phosphothreonine). Ser-1510 is subject to Phosphoserine. The span at 1518–1528 (ADRDNKKDEST) shows a compositional bias: basic and acidic residues.

Belongs to the 5'-3' exonuclease family. It depends on Mg(2+) as a cofactor.

The protein localises to the cytoplasm. The protein resides in the perinuclear region. It localises to the P-body. Its activity is regulated as follows. 3'-phosphoadenosine 5'-phosphate (pAp) is an inhibitor of KEM1. Sodium-induced GCN4 expression reduces pAp accumulation by activating HAL2 expression, and therefore maintains mRNA degradation capacity which is likely to be important for the accurate and rapid adaptation of gene expression to salt stress. Functionally, multifunctional protein that exhibits several independent functions at different levels of the cellular processes. 5'-3' exonuclease component of the nonsense-mediated mRNA decay (NMD) which is a highly conserved mRNA degradation pathway, an RNA surveillance system whose role is to identify and rid cells of mRNA with premature termination codons and thus prevents accumulation of potentially harmful truncated proteins. The NMD pathway has a second role regulating the decay of wild-type mRNAs, and especially mRNAs that are important for telomere functions. Participate in CTH2-mediated and VTS1-mediated mRNA turnover. Involved in the degradation of several hypomodified mature tRNA species and participates in the 5'-processing or the degradation of the snoRNA precursors and rRNA processing. Involved in defense against virus and suppresses viral RNA recombination by rapidly removing the 5'-truncated RNAs, the substrates of recombination, and thus reducing the chance for recombination to occur in the parental strain. Required for the assembly of the virus-like particles of the Ty3 retrotransposon and contributes to the efficient generation of narnavirus 20S RNA by playing a major role in the elimination of the non-viral upstream sequences from the primary transcripts. Degrades single-stranded DNA (ss-DNA) and can renature complementary ss-DNA as well as catalyzes the formation of heteroduplex DNA from circular ss-DNA and homologous linear ds-DNA in vitro. Acts as a microtubule-associated protein which interacts with cytoplasmic microtubules through beta-tubulin and promotes in vitro assembly of tubulin into microtubules. Associates with microtubule functions such as chromosome transmission, nuclear migration, and SPB duplication. Has also a role in G1 to S transition and is involved in nuclear fusion during karyogamy. Required for the expression of ROK1 at the post-transcriptional level and for the alpha-factor induction of the karyogamy genes KAR3 and KAR4. Plays a role in filamentous growth. This chain is 5'-3' exoribonuclease 1 (XRN1), found in Saccharomyces cerevisiae (strain ATCC 204508 / S288c) (Baker's yeast).